The chain runs to 235 residues: BPI fold-containing family A member 2 (235 aa).

The first 20 residues, Met1 to Ser20, serve as a signal peptide directing secretion. An intrachain disulfide couples Cys161 to Cys204.

The protein belongs to the BPI/LBP/Plunc superfamily. Plunc family. As to expression, expressed in parotid, submandibular and sublingual glands.

It is found in the secreted. In terms of biological role, has strong antibacterial activity against P.aeruginosa. This Rattus norvegicus (Rat) protein is BPI fold-containing family A member 2 (Bpifa2).